The chain runs to 971 residues: Unconventional myosin-XIX (971 aa).

Positions 1–25 are disordered; sequence MSRPLSKNTEREPKQINGHQNNLSN. The Myosin motor domain occupies 48-755; sequence HLYDDLTKVN…MVELLEERRL (708 aa). 145-152 lines the ATP pocket; it reads GESGAGKT. The tract at residues 611-633 is actin-binding; that stretch reads LESLMQILHSTTPHYIRCIKPNV. IQ domains are found at residues 758–787 and 780–809; these read ISSK…ATTI and QSKA…AATV. The segment at 826–971 is myMOMA region; the sequence is AAELDDSTED…FNEILLEKTV (146 aa).

The protein belongs to the TRAFAC class myosin-kinesin ATPase superfamily. Myosin family. As to quaternary structure, myosin is a hexamer of 2 heavy chains and 4 light chains.

Its subcellular location is the mitochondrion outer membrane. It localises to the cytoplasm. It is found in the cytoskeleton. Actin-based motor molecule with ATPase activity that localizes to the mitochondrion outer membrane. Motor protein that moves towards the plus-end of actin filaments. Required for mitochondrial inheritance during mitosis. May be involved in mitochondrial transport or positioning. The protein is Unconventional myosin-XIX of Xenopus laevis (African clawed frog).